The sequence spans 241 residues: Protocatechuate 3,4-dioxygenase beta chain (241 aa).

The Fe cation site is built by Tyr109, Tyr148, His161, and His163.

Belongs to the intradiol ring-cleavage dioxygenase family. The enzyme is an oligomer of 12 copies of the alpha and beta chains. The cofactor is Fe(3+).

The enzyme catalyses 3,4-dihydroxybenzoate + O2 = 3-carboxy-cis,cis-muconate + 2 H(+). The protein operates within aromatic compound metabolism; beta-ketoadipate pathway; 3-carboxy-cis,cis-muconate from 3,4-dihydroxybenzoate: step 1/1. Functionally, plays an essential role in the utilization of numerous aromatic and hydroaromatic compounds via the beta-ketoadipate pathway. The chain is Protocatechuate 3,4-dioxygenase beta chain (pcaH) from Acinetobacter baylyi (strain ATCC 33305 / BD413 / ADP1).